Here is a 388-residue protein sequence, read N- to C-terminus: Succinate--CoA ligase [ADP-forming] subunit beta (388 aa).

One can recognise an ATP-grasp domain in the interval 9 to 244; it reads KQLFAEFGLP…PSQEDKREAH (236 aa). ATP-binding positions include Lys46, 53–55, Glu99, Ser102, and Glu107; that span reads GRG. Mg(2+)-binding residues include Asn199 and Asp213. Substrate is bound by residues Asn264 and 321–323; that span reads GIV.

It belongs to the succinate/malate CoA ligase beta subunit family. Heterotetramer of two alpha and two beta subunits. Mg(2+) is required as a cofactor.

It catalyses the reaction succinate + ATP + CoA = succinyl-CoA + ADP + phosphate. It carries out the reaction GTP + succinate + CoA = succinyl-CoA + GDP + phosphate. Its pathway is carbohydrate metabolism; tricarboxylic acid cycle; succinate from succinyl-CoA (ligase route): step 1/1. Succinyl-CoA synthetase functions in the citric acid cycle (TCA), coupling the hydrolysis of succinyl-CoA to the synthesis of either ATP or GTP and thus represents the only step of substrate-level phosphorylation in the TCA. The beta subunit provides nucleotide specificity of the enzyme and binds the substrate succinate, while the binding sites for coenzyme A and phosphate are found in the alpha subunit. This chain is Succinate--CoA ligase [ADP-forming] subunit beta, found in Vibrio vulnificus (strain YJ016).